We begin with the raw amino-acid sequence, 469 residues long: D-3-phosphoglycerate dehydrogenase 1 (469 aa).

Ser-22, Ser-29, and Ser-33 each carry phosphoserine. NAD(+) contacts are provided by residues 208-209 (HI), Asp-228, 285-287 (ASR), and Asp-311. Arg-287 is an active-site residue. Glu-316 is an active-site residue. His-347 functions as the Proton donor in the catalytic mechanism. 347-350 (HIGG) contributes to the NAD(+) binding site. Residues 399 to 469 (RVLYIHQNVP…SAKISIRLLY (71 aa)) enclose the ACT domain.

This sequence belongs to the D-isomer specific 2-hydroxyacid dehydrogenase family.

The enzyme catalyses (2R)-3-phosphoglycerate + NAD(+) = 3-phosphooxypyruvate + NADH + H(+). The catalysed reaction is (R)-2-hydroxyglutarate + NAD(+) = 2-oxoglutarate + NADH + H(+). It participates in amino-acid biosynthesis; L-serine biosynthesis; L-serine from 3-phospho-D-glycerate: step 1/3. In terms of biological role, catalyzes the reversible oxidation of 3-phospho-D-glycerate to 3-phosphonooxypyruvate, the first step of the phosphorylated L-serine biosynthesis pathway. Also catalyzes the reversible oxidation of 2-hydroxyglutarate to 2-oxoglutarate. The polypeptide is D-3-phosphoglycerate dehydrogenase 1 (SER3) (Saccharomyces cerevisiae (strain ATCC 204508 / S288c) (Baker's yeast)).